The chain runs to 520 residues: Cytochrome P450 monooxygenase 98 (520 aa).

Residues 7–27 form a helical membrane-spanning segment; the sequence is MLNNNLLIVIGTFAVCVYIVL. A heme-binding site is contributed by Cys-445.

Belongs to the cytochrome P450 family. It depends on heme as a cofactor.

It is found in the membrane. Its pathway is secondary metabolite biosynthesis. In terms of biological role, cytochrome P450 monooxygenase that is able to use pyrene, phenanthrene, 3,5-dimethoxy-trans-stilbene and 3,5,4'-trimethoxy-trans-stilbene as substrates for oxidation. In Postia placenta (strain ATCC 44394 / Madison 698-R) (Brown rot fungus), this protein is Cytochrome P450 monooxygenase 98.